We begin with the raw amino-acid sequence, 226 residues long: Probable chemoreceptor glutamine deamidase CheD (226 aa).

The tract at residues 207–226 is disordered; the sequence is PGGMRVERFDTPSRRDPVGA.

The protein belongs to the CheD family.

It catalyses the reaction L-glutaminyl-[protein] + H2O = L-glutamyl-[protein] + NH4(+). Its function is as follows. Probably deamidates glutamine residues to glutamate on methyl-accepting chemotaxis receptors (MCPs), playing an important role in chemotaxis. This chain is Probable chemoreceptor glutamine deamidase CheD, found in Bordetella bronchiseptica (strain ATCC BAA-588 / NCTC 13252 / RB50) (Alcaligenes bronchisepticus).